A 143-amino-acid polypeptide reads, in one-letter code: Large ribosomal subunit protein uL11 (143 aa).

Belongs to the universal ribosomal protein uL11 family. Part of the ribosomal stalk of the 50S ribosomal subunit. Interacts with L10 and the large rRNA to form the base of the stalk. L10 forms an elongated spine to which L12 dimers bind in a sequential fashion forming a multimeric L10(L12)X complex. Post-translationally, one or more lysine residues are methylated.

Functionally, forms part of the ribosomal stalk which helps the ribosome interact with GTP-bound translation factors. The polypeptide is Large ribosomal subunit protein uL11 (Sphingopyxis alaskensis (strain DSM 13593 / LMG 18877 / RB2256) (Sphingomonas alaskensis)).